The following is a 309-amino-acid chain: Curved DNA-binding protein (309 aa).

The J domain maps to 5-69 (DYYAILGVKP…ERRAEYDQLR (65 aa)).

The protein resides in the cytoplasm. The protein localises to the nucleoid. Its function is as follows. DNA-binding protein that preferentially recognizes a curved DNA sequence. It is probably a functional analog of DnaJ; displays overlapping activities with DnaJ, but functions under different conditions, probably acting as a molecular chaperone in an adaptive response to environmental stresses other than heat shock. Lacks autonomous chaperone activity; binds native substrates and targets them for recognition by DnaK. Its activity is inhibited by the binding of CbpM. In Serratia proteamaculans (strain 568), this protein is Curved DNA-binding protein.